The following is a 368-amino-acid chain: Phosphoserine aminotransferase (368 aa).

Position 44 (Arg44) interacts with L-glutamate. Pyridoxal 5'-phosphate-binding positions include 78 to 79 (AT), Trp104, Thr157, Asp179, and Gln202. Lys203 carries the post-translational modification N6-(pyridoxal phosphate)lysine. Position 244–245 (244–245 (NT)) interacts with pyridoxal 5'-phosphate.

Belongs to the class-V pyridoxal-phosphate-dependent aminotransferase family. SerC subfamily. Homodimer. The cofactor is pyridoxal 5'-phosphate.

Its subcellular location is the cytoplasm. It carries out the reaction O-phospho-L-serine + 2-oxoglutarate = 3-phosphooxypyruvate + L-glutamate. The catalysed reaction is 4-(phosphooxy)-L-threonine + 2-oxoglutarate = (R)-3-hydroxy-2-oxo-4-phosphooxybutanoate + L-glutamate. It participates in amino-acid biosynthesis; L-serine biosynthesis; L-serine from 3-phospho-D-glycerate: step 2/3. Its pathway is cofactor biosynthesis; pyridoxine 5'-phosphate biosynthesis; pyridoxine 5'-phosphate from D-erythrose 4-phosphate: step 3/5. Catalyzes the reversible conversion of 3-phosphohydroxypyruvate to phosphoserine and of 3-hydroxy-2-oxo-4-phosphonooxybutanoate to phosphohydroxythreonine. The chain is Phosphoserine aminotransferase from Neisseria meningitidis serogroup C / serotype 2a (strain ATCC 700532 / DSM 15464 / FAM18).